Consider the following 138-residue polypeptide: ATP synthase epsilon chain (138 aa).

It belongs to the ATPase epsilon chain family. F-type ATPases have 2 components, CF(1) - the catalytic core - and CF(0) - the membrane proton channel. CF(1) has five subunits: alpha(3), beta(3), gamma(1), delta(1), epsilon(1). CF(0) has three main subunits: a, b and c.

The protein resides in the cell inner membrane. In terms of biological role, produces ATP from ADP in the presence of a proton gradient across the membrane. The sequence is that of ATP synthase epsilon chain from Polynucleobacter necessarius subsp. necessarius (strain STIR1).